Consider the following 53-residue polypeptide: UPF0391 membrane protein BPSS2216 (53 aa).

The next 2 helical transmembrane spans lie at Ala5–Ala25 and Ile30–Val50.

It belongs to the UPF0391 family.

The protein localises to the cell membrane. The protein is UPF0391 membrane protein BPSS2216 of Burkholderia pseudomallei (strain K96243).